The chain runs to 247 residues: Eukaryotic translation initiation factor 3 subunit J (247 aa).

2 disordered regions span residues 1 to 64 and 77 to 101; these read MADW…KTLK and EEKRKAEEKQKLEEEDKELTPEEQM. Residues 24–45 are compositionally biased toward acidic residues; that stretch reads EGEDEDDDIKESWDDDDEDEKK. Positions 43–108 form a coiled coil; that stretch reads EKKEDEAKNT…EQMAEKLRRQ (66 aa).

The protein belongs to the eIF-3 subunit J family. As to quaternary structure, component of the eukaryotic translation initiation factor 3 (eIF-3) complex.

It is found in the cytoplasm. Component of the eukaryotic translation initiation factor 3 (eIF-3) complex, which is involved in protein synthesis of a specialized repertoire of mRNAs and, together with other initiation factors, stimulates binding of mRNA and methionyl-tRNAi to the 40S ribosome. The eIF-3 complex specifically targets and initiates translation of a subset of mRNAs involved in cell proliferation. This Nematostella vectensis (Starlet sea anemone) protein is Eukaryotic translation initiation factor 3 subunit J.